We begin with the raw amino-acid sequence, 362 residues long: Prostaglandin F2-alpha receptor (362 aa).

Residues 1-31 (MSTNSSIQPVSPESELLSNTTCQLEEDLSIS) lie on the Extracellular side of the membrane. Asparagine 4 and asparagine 19 each carry an N-linked (GlcNAc...) asparagine glycan. The chain crosses the membrane as a helical span at residues 32–54 (FSIIFMTVGILSNSLAIAILMKA). Residues 55–69 (YQRFRQKYKSSFLLL) are Cytoplasmic-facing. Residues 70–90 (ASALVITDFFGHLINGTIAVF) traverse the membrane as a helical segment. The Extracellular portion of the chain corresponds to 91–109 (VYASDKDWIYFDKSNILCS). Cysteine 108 and cysteine 186 are disulfide-bonded. Residues 110 to 131 (IFGICMVFSGLCPLFLGSLMAI) traverse the membrane as a helical segment. Residues 132–152 (ERCIGVTKPIFHSTKITTKHV) lie on the Cytoplasmic side of the membrane. A helical transmembrane segment spans residues 153-175 (KMMLSGVCFFAVFVALLPILGHR). The Extracellular segment spans residues 176–198 (DYKIQASRTWCFYKTDEIKDWED). Residues 199–224 (RFYLLLFAFLGLLALGISFVCNAITG) traverse the membrane as a helical segment. Topologically, residues 225-250 (ISLLKVKFRSQQHRQGRSHHFEMVIQ) are cytoplasmic. Residues 251–267 (LLGIMCVSCICWSPFLV) form a helical membrane-spanning segment. Residues 268–285 (TMASIGMNIQDFKDSCER) are Extracellular-facing. A helical membrane pass occupies residues 286–307 (TLFTLRMATWNQILDPWVYILL). The Cytoplasmic portion of the chain corresponds to 308–362 (RKAVLRNLYVCTRRCCGVHVISLHVWELSSIKDSLKVAAISDLPVTEKVTQQTST).

The protein belongs to the G-protein coupled receptor 1 family.

Its subcellular location is the cell membrane. Its function is as follows. Receptor for prostaglandin F2-alpha (PGF2-alpha). The activity of this receptor is mediated by G proteins which activate a phosphatidylinositol-calcium second messenger system. Initiates luteolysis in the corpus luteum. In Bos taurus (Bovine), this protein is Prostaglandin F2-alpha receptor (PTGFR).